The sequence spans 314 residues: tRNA dimethylallyltransferase (314 aa).

Residues 1-24 (MAEEPQRSPAPTSPFAFTVPSNPL) are disordered. Position 40–47 (40–47 (GPTASGKS)) interacts with ATP. 42-47 (TASGKS) lines the substrate pocket.

This sequence belongs to the IPP transferase family. As to quaternary structure, monomer. The cofactor is Mg(2+).

It catalyses the reaction adenosine(37) in tRNA + dimethylallyl diphosphate = N(6)-dimethylallyladenosine(37) in tRNA + diphosphate. Its function is as follows. Catalyzes the transfer of a dimethylallyl group onto the adenine at position 37 in tRNAs that read codons beginning with uridine, leading to the formation of N6-(dimethylallyl)adenosine (i(6)A). This Cereibacter sphaeroides (strain ATCC 17029 / ATH 2.4.9) (Rhodobacter sphaeroides) protein is tRNA dimethylallyltransferase.